The following is a 326-amino-acid chain: Ribose operon repressor (326 aa).

Residues Met1 to Lys56 enclose the HTH lacI-type domain. A DNA-binding region (H-T-H motif) is located at residues Ile4–Asn23.

Transcriptional repressor for the ribose rbsDACBK operon. This is Ribose operon repressor (rbsR) from Bacillus subtilis (strain 168).